Here is a 321-residue protein sequence, read N- to C-terminus: Transaldolase (321 aa).

Catalysis depends on lysine 132, which acts as the Schiff-base intermediate with substrate.

This sequence belongs to the transaldolase family. Type 1 subfamily. Homodimer.

It localises to the cytoplasm. The enzyme catalyses D-sedoheptulose 7-phosphate + D-glyceraldehyde 3-phosphate = D-erythrose 4-phosphate + beta-D-fructose 6-phosphate. It participates in carbohydrate degradation; pentose phosphate pathway; D-glyceraldehyde 3-phosphate and beta-D-fructose 6-phosphate from D-ribose 5-phosphate and D-xylulose 5-phosphate (non-oxidative stage): step 2/3. Functionally, transaldolase is important for the balance of metabolites in the pentose-phosphate pathway. In Agrobacterium fabrum (strain C58 / ATCC 33970) (Agrobacterium tumefaciens (strain C58)), this protein is Transaldolase.